The sequence spans 318 residues: Beta-ketoacyl-[acyl-carrier-protein] synthase III (318 aa).

Active-site residues include Cys-112 and His-245. The interval 246 to 250 (QANIR) is ACP-binding. Residue Asn-275 is part of the active site.

This sequence belongs to the thiolase-like superfamily. FabH family. In terms of assembly, homodimer.

It localises to the cytoplasm. It catalyses the reaction malonyl-[ACP] + acetyl-CoA + H(+) = 3-oxobutanoyl-[ACP] + CO2 + CoA. It functions in the pathway lipid metabolism; fatty acid biosynthesis. Its function is as follows. Catalyzes the condensation reaction of fatty acid synthesis by the addition to an acyl acceptor of two carbons from malonyl-ACP. Catalyzes the first condensation reaction which initiates fatty acid synthesis and may therefore play a role in governing the total rate of fatty acid production. Possesses both acetoacetyl-ACP synthase and acetyl transacylase activities. Its substrate specificity determines the biosynthesis of branched-chain and/or straight-chain of fatty acids. The sequence is that of Beta-ketoacyl-[acyl-carrier-protein] synthase III from Nitrosomonas europaea (strain ATCC 19718 / CIP 103999 / KCTC 2705 / NBRC 14298).